Here is a 1195-residue protein sequence, read N- to C-terminus: Phosphatidylinositol-3,5-bisphosphate 3-phosphatase MTMR4 (1195 aa).

Ser8 is modified (phosphoserine). Residues Glu153–Tyr570 enclose the Myotubularin phosphatase domain. A 1,2-diacyl-sn-glycero-3-phospho-(1D-myo-inositol-3,5-bisphosphate)-binding residues include Asn320, Asn345, and Ile346. Positions 320, 345, and 346 each coordinate a 1,2-diacyl-sn-glycero-3-phospho-(1D-myo-inositol-3-phosphate). Cys407 serves as the catalytic Phosphocysteine intermediate. Residues Ser408, Asp409, Gly410, Trp411, Asp412, Arg413, Lys449, and Arg453 each coordinate a 1,2-diacyl-sn-glycero-3-phospho-(1D-myo-inositol-3,5-bisphosphate). A 1,2-diacyl-sn-glycero-3-phospho-(1D-myo-inositol-3-phosphate)-binding residues include Ser408, Asp409, Gly410, Trp411, Asp412, and Arg413. Arg453 is a binding site for a 1,2-diacyl-sn-glycero-3-phospho-(1D-myo-inositol-3-phosphate). 2 positions are modified to phosphoserine: Ser610 and Ser629. 3 disordered regions span residues Glu645–Pro756, Glu780–Gly800, and Asp827–Asn877. Basic and acidic residues predominate over residues Pro720 to Lys729. 2 stretches are compositionally biased toward polar residues: residues Glu780–Pro795 and Asp831–Pro854. The short motif at Val1004–Tyr1008 is the PY-motif; substrate motif for NEDD4 element. A coiled-coil region spans residues His1023–Cys1055. Residues Asp1114–Gln1174 form an FYVE-type zinc finger. Cys1120, Cys1123, Cys1136, Cys1139, Cys1144, Cys1147, Cys1166, and Cys1169 together coordinate Zn(2+).

The protein belongs to the protein-tyrosine phosphatase family. Non-receptor class myotubularin subfamily. Homooligomeric. Forms MTMR3:MTMR4 heterooligomers; regulates the localization of both proteins. The MTMR3:MTMR4 heterooligomer can also recruit both CEP55 and PLK1; occurs during early mitosis, regulates the phosphorylation of CEP55 by PLK1 and its recruitment to the midbody where it can mediate cell abscission. Interacts with SMAD2 and SMAD3; negatively regulates TGF-beta signaling through SMAD2 and SMAD3 dephosphorylation and retention in endosomes. Interacts with SMAD1; negatively regulates BMP signaling through SMAD1 dephosphorylation and retention in endosomes. Post-translationally, ubiquitinated. Ubiquitination by NEDD4 probably leads to proteasomal degradation. Phosphorylated by CDK1 during mitosis. In terms of tissue distribution, expressed in brain, heart, kidney, spleen, liver, colon, testis, muscle, placenta, thyroid gland, pancreas, ovary, prostate, skin, peripheral blood, and bone marrow.

It localises to the early endosome membrane. Its subcellular location is the recycling endosome membrane. It is found in the late endosome membrane. The protein localises to the cytoplasmic vesicle. The protein resides in the phagosome membrane. It catalyses the reaction a 1,2-diacyl-sn-glycero-3-phospho-(1D-myo-inositol-3-phosphate) + H2O = a 1,2-diacyl-sn-glycero-3-phospho-(1D-myo-inositol) + phosphate. It carries out the reaction a 1,2-diacyl-sn-glycero-3-phospho-(1D-myo-inositol-3,5-bisphosphate) + H2O = a 1,2-diacyl-sn-glycero-3-phospho-(1D-myo-inositol-5-phosphate) + phosphate. The enzyme catalyses 1,2-dioctanoyl-sn-glycero-3-phospho-(1-D-myo-inositol-3-phosphate) + H2O = 1,2-dioctanoyl-sn-glycero-3-phospho-(1D-myo-inositol) + phosphate. The catalysed reaction is 1,2-dioctanoyl-sn-glycero-3-phospho-(1D-myo-inositol-3,5-bisphosphate) + H2O = 1,2-dioctanoyl-sn-glycero-3-phospho-(1D-myo-inositol-5-phosphate) + phosphate. With respect to regulation, the phosphatidylinositol-3-phosphate phosphatase activity is inhibited by vanadate. Functionally, lipid phosphatase that specifically dephosphorylates the D-3 position of phosphatidylinositol 3-phosphate and phosphatidylinositol 3,5-bisphosphate, generating phosphatidylinositol and phosphatidylinositol 5-phosphate. Decreases the levels of phosphatidylinositol 3-phosphate, a phospholipid found in cell membranes where it acts as key regulator of both cell signaling and intracellular membrane traffic, in a subset of endosomal membranes to negatively regulate both endocytic recycling and trafficking and/or maturation of endosomes toward lysosomes. Through phosphatidylinositol 3-phosphate turnover in phagosome membranes regulates phagocytosis and phagosome maturation. By decreasing phosphatidylinositol 3-monophosphate (PI3P) levels in immune cells it can also regulate the innate immune response. Beside its lipid phosphatase activity, can also function as a molecular adapter to regulate midbody abscission during mitotic cytokinesis. Can also negatively regulate TGF-beta and BMP signaling through Smad proteins dephosphorylation and retention in endosomes. In Homo sapiens (Human), this protein is Phosphatidylinositol-3,5-bisphosphate 3-phosphatase MTMR4.